Consider the following 1122-residue polypeptide: DNA polymerase (1122 aa).

This sequence belongs to the DNA polymerase type-B family. As to quaternary structure, heterodimer with the terminal protein; this heterodimer binds to bp 9 to 18 of the genome. Forms a complex with viral pTP, DBP and hosts NFIA and POU2F1/OCT1 for initiation of replication.

The protein localises to the host nucleus. It carries out the reaction DNA(n) + a 2'-deoxyribonucleoside 5'-triphosphate = DNA(n+1) + diphosphate. Functionally, eukaryotic-type DNA polymerase involved in viral genomic replication. DNA synthesis is protein primed, and acts in a strand displacement replication. Assembles in complex with viral pTP, DBP, host NFIA and host POU2F1/OCT1 on viral origin of replication. The polymerase covalently transfers dCMP onto pTP, thereby initiating complementary strand synthesis. In Human adenovirus B serotype 7 (HAdV-7), this protein is DNA polymerase.